Here is a 362-residue protein sequence, read N- to C-terminus: 3-dehydroquinate synthase (362 aa).

Residues 71–76 (DGEKYK), 105–109 (GVIGD), 129–130 (TT), lysine 142, lysine 151, and 169–172 (CLKT) contribute to the NAD(+) site. Zn(2+) is bound by residues glutamate 184, histidine 247, and histidine 264.

The protein belongs to the sugar phosphate cyclases superfamily. Dehydroquinate synthase family. It depends on Co(2+) as a cofactor. Requires Zn(2+) as cofactor. NAD(+) is required as a cofactor.

Its subcellular location is the cytoplasm. The catalysed reaction is 7-phospho-2-dehydro-3-deoxy-D-arabino-heptonate = 3-dehydroquinate + phosphate. The protein operates within metabolic intermediate biosynthesis; chorismate biosynthesis; chorismate from D-erythrose 4-phosphate and phosphoenolpyruvate: step 2/7. In terms of biological role, catalyzes the conversion of 3-deoxy-D-arabino-heptulosonate 7-phosphate (DAHP) to dehydroquinate (DHQ). The sequence is that of 3-dehydroquinate synthase from Citrobacter koseri (strain ATCC BAA-895 / CDC 4225-83 / SGSC4696).